Consider the following 321-residue polypeptide: Malate dehydrogenase (321 aa).

NAD(+)-binding positions include 10 to 15 (GGGQIG) and Asp-34. Residues Arg-83 and Arg-89 each coordinate substrate. NAD(+) is bound by residues Asn-96 and 119–121 (ISN). Substrate is bound by residues Asn-121 and Arg-152. The active-site Proton acceptor is the His-176.

The protein belongs to the LDH/MDH superfamily. MDH type 3 family.

It catalyses the reaction (S)-malate + NAD(+) = oxaloacetate + NADH + H(+). Catalyzes the reversible oxidation of malate to oxaloacetate. This chain is Malate dehydrogenase, found in Trichlorobacter lovleyi (strain ATCC BAA-1151 / DSM 17278 / SZ) (Geobacter lovleyi).